Reading from the N-terminus, the 92-residue chain is Small ribosomal subunit protein uS19c (92 aa).

Belongs to the universal ribosomal protein uS19 family.

It localises to the plastid. The protein resides in the chloroplast. Protein S19 forms a complex with S13 that binds strongly to the 16S ribosomal RNA. This Nicotiana sylvestris (Wood tobacco) protein is Small ribosomal subunit protein uS19c.